Here is a 777-residue protein sequence, read N- to C-terminus: Homoaconitase, mitochondrial (777 aa).

A mitochondrion-targeting transit peptide spans 1 to 35; that stretch reads MFKRTGSLLLRCRASRVPVIGRPLISLSTSSTSLS. Residues 47 to 74 form a disordered region; that stretch reads LRRYTEASSSTTQTSPSSSSWPAPDAAP. Over residues 52-74 the composition is skewed to low complexity; the sequence is EASSSTTQTSPSSSSWPAPDAAP. [4Fe-4S] cluster is bound by residues Cys398, Cys466, and Cys469.

This sequence belongs to the aconitase/IPM isomerase family. The cofactor is [4Fe-4S] cluster.

The protein resides in the mitochondrion. It catalyses the reaction (2R,3S)-homoisocitrate = cis-homoaconitate + H2O. Its pathway is amino-acid biosynthesis; L-lysine biosynthesis via AAA pathway; L-alpha-aminoadipate from 2-oxoglutarate: step 3/5. Its function is as follows. Catalyzes the reversible hydration of cis-homoaconitate to (2R,3S)-homoisocitrate, a step in the alpha-aminoadipate pathway for lysine biosynthesis. The sequence is that of Homoaconitase, mitochondrial (lys4) from Aspergillus fumigatus (strain ATCC MYA-4609 / CBS 101355 / FGSC A1100 / Af293) (Neosartorya fumigata).